Here is a 203-residue protein sequence, read N- to C-terminus: Abscisic acid receptor PYL5 (203 aa).

Polar residues predominate over residues 1-18; it reads MRSPVQLQHGSDATNGFH. The segment at 1–29 is disordered; sequence MRSPVQLQHGSDATNGFHTLQPHDQTDGP. The tract at residues 51-201 is START-like; the sequence is HDVGPDQCCS…NLQSLARSTN (151 aa). Abscisate-binding positions include lysine 87, 117 to 122, 144 to 150, and glutamate 166; these read AVSSTE and RLKNYRS. Positions 113–117 match the Gate loop motif; sequence SGLPA. The Latch loop motif lies at 143–145; the sequence is HRL.

Belongs to the PYR/PYL/RCAR abscisic acid intracellular receptor family. As to quaternary structure, monomer. Homodimer. Binds ABA on one subunit only. Binds to CARs protein in an ABA-independent manner, both at the plasma membrane and in the nucleus. Binds both (-)-ABA and (+)-ABA. Interacts with HAB1, ABI1 and ABI2, and possibly with other PP2Cs.

The protein localises to the cytoplasm. It is found in the nucleus. Its subcellular location is the cell membrane. Its function is as follows. Receptor for abscisic acid (ABA) required for ABA-mediated responses such as stomatal closure and germination inhibition. Inhibits the activity of group-A protein phosphatases type 2C (PP2Cs) in an ABA-independent manner but more efficiently when activated by ABA. Confers enhanced sensitivity to ABA. Can be activated by both (-)-ABA and (+)-ABA. The polypeptide is Abscisic acid receptor PYL5 (PYL5) (Arabidopsis thaliana (Mouse-ear cress)).